A 178-amino-acid polypeptide reads, in one-letter code: Ribosome maturation factor RimM (178 aa).

A PRC barrel domain is found at 100-178; that stretch reads DEGEFYWHQL…EIRVDWDADF (79 aa).

This sequence belongs to the RimM family. In terms of assembly, binds ribosomal protein uS19.

The protein localises to the cytoplasm. Its function is as follows. An accessory protein needed during the final step in the assembly of 30S ribosomal subunit, possibly for assembly of the head region. Essential for efficient processing of 16S rRNA. May be needed both before and after RbfA during the maturation of 16S rRNA. It has affinity for free ribosomal 30S subunits but not for 70S ribosomes. In Azotobacter vinelandii (strain DJ / ATCC BAA-1303), this protein is Ribosome maturation factor RimM.